The following is a 146-amino-acid chain: Transcription antitermination protein NusB (146 aa).

Belongs to the NusB family.

Functionally, involved in transcription antitermination. Required for transcription of ribosomal RNA (rRNA) genes. Binds specifically to the boxA antiterminator sequence of the ribosomal RNA (rrn) operons. In Herpetosiphon aurantiacus (strain ATCC 23779 / DSM 785 / 114-95), this protein is Transcription antitermination protein NusB.